The chain runs to 170 residues: Phosphopantetheine adenylyltransferase (170 aa).

Residue Thr-14 participates in substrate binding. ATP contacts are provided by residues 14–15 (TF) and His-22. Residues Lys-46, Leu-78, and Arg-92 each coordinate substrate. Residues 93 to 95 (GLR), Glu-103, and 128 to 134 (WLYISST) each bind ATP.

This sequence belongs to the bacterial CoaD family. In terms of assembly, homohexamer. Mg(2+) serves as cofactor.

The protein resides in the cytoplasm. It catalyses the reaction (R)-4'-phosphopantetheine + ATP + H(+) = 3'-dephospho-CoA + diphosphate. It functions in the pathway cofactor biosynthesis; coenzyme A biosynthesis; CoA from (R)-pantothenate: step 4/5. In terms of biological role, reversibly transfers an adenylyl group from ATP to 4'-phosphopantetheine, yielding dephospho-CoA (dPCoA) and pyrophosphate. The sequence is that of Phosphopantetheine adenylyltransferase from Oleidesulfovibrio alaskensis (strain ATCC BAA-1058 / DSM 17464 / G20) (Desulfovibrio alaskensis).